The sequence spans 693 residues: Translation initiation factor IF-2 (693 aa).

The tr-type G domain occupies 181–349 (PRPPVVTVMG…MILLVAEMNE (169 aa)). Positions 190–197 (GHVDHGKT) are G1. 190–197 (GHVDHGKT) provides a ligand contact to GTP. The G2 stretch occupies residues 215 to 219 (GITQS). The interval 236-239 (DTPG) is G3. GTP contacts are provided by residues 236–240 (DTPGH) and 290–293 (NKID). The interval 290 to 293 (NKID) is G4. The G5 stretch occupies residues 327–329 (SAR).

It belongs to the TRAFAC class translation factor GTPase superfamily. Classic translation factor GTPase family. IF-2 subfamily.

The protein localises to the cytoplasm. In terms of biological role, one of the essential components for the initiation of protein synthesis. Protects formylmethionyl-tRNA from spontaneous hydrolysis and promotes its binding to the 30S ribosomal subunits. Also involved in the hydrolysis of GTP during the formation of the 70S ribosomal complex. The sequence is that of Translation initiation factor IF-2 from Thermotoga petrophila (strain ATCC BAA-488 / DSM 13995 / JCM 10881 / RKU-1).